Reading from the N-terminus, the 136-residue chain is MSTLPPLYATLNVALGGAIGAVLRYQMGRWMTGWLGAPAMSVFPWATLAINALGSLLMGVLAGVLFKLSPGVQDQWRLLIGTGILGGFTTFSAFSLEVWVMVERGQPAFAALYVVLSVSLAISALVFGLMLTRLFA.

4 helical membrane-spanning segments follow: residues 3-23 (TLPP…GAVL), 46-66 (ATLA…GVLF), 78-98 (LLIG…SLEV), and 109-129 (FAAL…VFGL). Na(+) is bound by residues glycine 86 and threonine 89.

The protein belongs to the fluoride channel Fluc/FEX (TC 1.A.43) family.

It is found in the cell inner membrane. The catalysed reaction is fluoride(in) = fluoride(out). Its activity is regulated as follows. Na(+) is not transported, but it plays an essential structural role and its presence is essential for fluoride channel function. Functionally, fluoride-specific ion channel. Important for reducing fluoride concentration in the cell, thus reducing its toxicity. The polypeptide is Fluoride-specific ion channel FluC (Erythrobacter litoralis (strain HTCC2594)).